The sequence spans 248 residues: PF03932 family protein CutC (248 aa).

This sequence belongs to the CutC family.

The protein resides in the cytoplasm. The sequence is that of PF03932 family protein CutC from Photorhabdus laumondii subsp. laumondii (strain DSM 15139 / CIP 105565 / TT01) (Photorhabdus luminescens subsp. laumondii).